The sequence spans 637 residues: MNDWSIDDARAGYNVTHWSQGFYGISDQGEVTVSPDPKNPEYKIGLNELAKDMVKAGVALPVLVRFPQILHHRVNSLCQAFDQAIQKYEYQADYLLVYPIKVNQQQTVVEEILASQASKEVPQLGLEAGSKPELMAVLAMAQKASSVIVCNGYKDNEYIRLALIGEKLGHKVYIVLEKLSELKMVLAESKRLGVTPRLGLRARLAFQGKGKWQASGGEKSKFGLSAAQILTVVDQLKQNDMLDSLQLLHFHLGSQIANIRDIRQGVSEAGRFYCELRELGASVNCFDVGGGLAVDYDGTRSQSNNSMNYGLTEYANNIVNVLTDICNEYAQPMPRIISESGRYLTAHHAVLITDVIGTEAYQPENIQPPAEESPQLLHNMWHSWSEISGRADQRALIEIYHDSQSDLQEAQSLFALGQLSLAERAWAEQANLRVCHEVQGLLSTKNRYHRPIIDELNEKLADKFFVNFSLFQSLPDAWGIDQVFPVLPLSGLDKAPERRAVMLDITCDSDGIVDQYVDGQGIETTLPVPAWSAESPYLIGFFLVGAYQEILGDMHNLFGDTNSAVVRIEENGVTNIESVLAGDTVADVLRYVNLDAVAFMRTYEELVNLHIEEDERAQILEELQVGLKGYTYLEDFS.

Position 101 is an N6-(pyridoxal phosphate)lysine (lysine 101). Residue 286–296 (FDVGGGLAVDY) coordinates substrate.

The protein belongs to the Orn/Lys/Arg decarboxylase class-II family. SpeA subfamily. Requires Mg(2+) as cofactor. It depends on pyridoxal 5'-phosphate as a cofactor.

It carries out the reaction L-arginine + H(+) = agmatine + CO2. It functions in the pathway amine and polyamine biosynthesis; agmatine biosynthesis; agmatine from L-arginine: step 1/1. Catalyzes the biosynthesis of agmatine from arginine. This is Biosynthetic arginine decarboxylase from Shewanella putrefaciens (strain CN-32 / ATCC BAA-453).